The chain runs to 146 residues: Hemoglobin subunit beta (146 aa).

The region spanning 2–146 (HWTAEEKQLI…VAHALARKYH (145 aa)) is the Globin domain. Positions 63 and 92 each coordinate heme b.

Belongs to the globin family. As to quaternary structure, heterotetramer of two alpha chains and two beta chains. Red blood cells.

In terms of biological role, involved in oxygen transport from the lung to the various peripheral tissues. In Chloephaga melanoptera (Andean goose), this protein is Hemoglobin subunit beta (HBB).